A 282-amino-acid polypeptide reads, in one-letter code: 2-dehydro-3-deoxyphosphooctonate aldolase (282 aa).

It belongs to the KdsA family.

Its subcellular location is the cytoplasm. The enzyme catalyses D-arabinose 5-phosphate + phosphoenolpyruvate + H2O = 3-deoxy-alpha-D-manno-2-octulosonate-8-phosphate + phosphate. It functions in the pathway carbohydrate biosynthesis; 3-deoxy-D-manno-octulosonate biosynthesis; 3-deoxy-D-manno-octulosonate from D-ribulose 5-phosphate: step 2/3. It participates in bacterial outer membrane biogenesis; lipopolysaccharide biosynthesis. The chain is 2-dehydro-3-deoxyphosphooctonate aldolase from Shewanella halifaxensis (strain HAW-EB4).